The chain runs to 196 residues: Elongation factor Ts (196 aa).

The involved in Mg(2+) ion dislocation from EF-Tu stretch occupies residues 80–83 (TDFV).

The protein belongs to the EF-Ts family.

The protein resides in the cytoplasm. Functionally, associates with the EF-Tu.GDP complex and induces the exchange of GDP to GTP. It remains bound to the aminoacyl-tRNA.EF-Tu.GTP complex up to the GTP hydrolysis stage on the ribosome. The protein is Elongation factor Ts of Thermosipho melanesiensis (strain DSM 12029 / CIP 104789 / BI429).